We begin with the raw amino-acid sequence, 349 residues long: S-adenosylmethionine:tRNA ribosyltransferase-isomerase (349 aa).

It belongs to the QueA family. Monomer.

The protein localises to the cytoplasm. It carries out the reaction 7-aminomethyl-7-carbaguanosine(34) in tRNA + S-adenosyl-L-methionine = epoxyqueuosine(34) in tRNA + adenine + L-methionine + 2 H(+). It participates in tRNA modification; tRNA-queuosine biosynthesis. In terms of biological role, transfers and isomerizes the ribose moiety from AdoMet to the 7-aminomethyl group of 7-deazaguanine (preQ1-tRNA) to give epoxyqueuosine (oQ-tRNA). The sequence is that of S-adenosylmethionine:tRNA ribosyltransferase-isomerase from Flavobacterium psychrophilum (strain ATCC 49511 / DSM 21280 / CIP 103535 / JIP02/86).